Reading from the N-terminus, the 49-residue chain is Large ribosomal subunit protein bL33 (49 aa).

It belongs to the bacterial ribosomal protein bL33 family.

The protein is Large ribosomal subunit protein bL33 of Natranaerobius thermophilus (strain ATCC BAA-1301 / DSM 18059 / JW/NM-WN-LF).